We begin with the raw amino-acid sequence, 322 residues long: Corticotropin-releasing factor-binding protein (322 aa).

The signal sequence occupies residues 1–24 (MSPNFKLQCHFILILLTALRGESR). 5 disulfide bridges follow: Cys60–Cys81, Cys104–Cys141, Cys183–Cys205, Cys237–Cys264, and Cys277–Cys318. N-linked (GlcNAc...) asparagine glycosylation occurs at Asn204.

Belongs to the CRF-binding protein family.

Its subcellular location is the secreted. Its function is as follows. Binds CRF and inactivates it. May prevent inappropriate pituitary-adrenal stimulation in pregnancy. This Mus musculus (Mouse) protein is Corticotropin-releasing factor-binding protein (Crhbp).